A 72-amino-acid chain; its full sequence is Translation initiation factor IF-1 (72 aa).

The 72-residue stretch at 1–72 (MAKEETIQMQ…TRARITFRTK (72 aa)) folds into the S1-like domain.

It belongs to the IF-1 family. In terms of assembly, component of the 30S ribosomal translation pre-initiation complex which assembles on the 30S ribosome in the order IF-2 and IF-3, IF-1 and N-formylmethionyl-tRNA(fMet); mRNA recruitment can occur at any time during PIC assembly.

The protein localises to the cytoplasm. Its function is as follows. One of the essential components for the initiation of protein synthesis. Stabilizes the binding of IF-2 and IF-3 on the 30S subunit to which N-formylmethionyl-tRNA(fMet) subsequently binds. Helps modulate mRNA selection, yielding the 30S pre-initiation complex (PIC). Upon addition of the 50S ribosomal subunit IF-1, IF-2 and IF-3 are released leaving the mature 70S translation initiation complex. This chain is Translation initiation factor IF-1, found in Nitrosomonas eutropha (strain DSM 101675 / C91 / Nm57).